A 251-amino-acid polypeptide reads, in one-letter code: uncharacterized protein (251 aa).

Disordered regions lie at residues 1-93 (MQPG…ASPG), 107-152 (GLRS…SRPQ), 169-188 (PSSI…VSLS), and 224-251 (LQAQ…STPS). Residues 225 to 234 (QAQNLPSSGP) are compositionally biased toward polar residues.

This is an uncharacterized protein from Homo sapiens (Human).